Consider the following 291-residue polypeptide: Protease HtpX (291 aa).

Transmembrane regions (helical) follow at residues 4–24 (VLLFLATNLAVMLVLSIVLSV) and 37–57 (GGLLLMAAVFGFGGSIISLLM). His-143 contacts Zn(2+). The active site involves Glu-144. Position 147 (His-147) interacts with Zn(2+). 2 helical membrane-spanning segments follow: residues 158–178 (LIQGVVNTFVIYISRVLAGIV) and 198–218 (FAISMVFELIFGILASTIVMW). A Zn(2+)-binding site is contributed by Glu-224.

It belongs to the peptidase M48B family. It depends on Zn(2+) as a cofactor.

The protein localises to the cell inner membrane. The chain is Protease HtpX from Tolumonas auensis (strain DSM 9187 / NBRC 110442 / TA 4).